The following is a 497-amino-acid chain: uncharacterized protein (497 aa).

2 consecutive ABC transporter domains span residues 9–247 and 256–496; these read VSVR…MGQA and ARPA…TGMA. 41-48 contacts ATP; that stretch reads GGNGAGKS.

It belongs to the ABC transporter superfamily. Ribose importer (TC 3.A.1.2.1) family.

It is found in the cell membrane. In terms of biological role, probably part of the binding-protein-dependent transport system y4mIJK. This system probably transports a sugar. Probably responsible for energy coupling to the transport system. This is an uncharacterized protein from Sinorhizobium fredii (strain NBRC 101917 / NGR234).